Consider the following 728-residue polypeptide: tRNA (guanine(27)-N(2))-dimethyltransferase (728 aa).

The segment covering 1–10 (MENMAEEELL) has biased composition (acidic residues). Disordered regions lie at residues 1-78 (MENM…SKRH) and 98-118 (DVDS…SQTC). Thr-23 bears the Phosphothreonine mark. The span at 23 to 33 (TPAPDSAPVPA) shows a compositional bias: pro residues. The segment covering 34 to 46 (PAADTALDSAPTP) has biased composition (low complexity). Residues 47-61 (DSDPAPALAPAPAPA) show a composition bias toward pro residues. Position 63 is a phosphoserine (Ser-63). Polar residues predominate over residues 101 to 118 (SASSLNSDNPGTENSQTC). The Nucleolar localization signal signature appears at 132–136 (HKLRR). A C2H2-type zinc finger spans residues 181 to 203 (YHCIICSATITRRTDMLGHVKRH). Residues 224–683 (EILKETDTDI…APLMQFKSIL (460 aa)) enclose the Trm1 methyltransferase domain. The S-adenosyl-L-methionine site is built by Arg-257, Asp-304, Asp-352, and Ala-353. The Zn(2+) site is built by Cys-483, Cys-486, Cys-508, and Cys-510. Residue Lys-580 forms a Glycyl lysine isopeptide (Lys-Gly) (interchain with G-Cter in SUMO2) linkage. Position 607 is a phosphoserine (Ser-607). The tract at residues 693–728 (GAQSEGQMPPAAEDTVTDRVEMSVSDKAEASGCRRW) is disordered. The span at 708-721 (VTDRVEMSVSDKAE) shows a compositional bias: basic and acidic residues.

It belongs to the class I-like SAM-binding methyltransferase superfamily. Trm1 family. Expressed in various neuronal structures during embryonic development, including spinal ganglia, trigeminal nerve and ganglion, olfactory and nasopharyngeal epithelium, nuclei of the metencephalon, thalamus and medulla oblongata. Also expressed in lung, esophagus, epiglottis, ependyma, vertebral column, spinal cord and brown adipose tissue. Expression persists in the adult brain with dynamically changing patterns in cortex and cerebellum.

The protein localises to the nucleus. Its subcellular location is the nucleolus. It catalyses the reaction guanosine(27) in tRNA(Tyr) + 2 S-adenosyl-L-methionine = N(2)-dimethylguanosine(27) in tRNA(Tyr) + 2 S-adenosyl-L-homocysteine + 2 H(+). In terms of biological role, specifically dimethylates a single guanine residue at position 27 of tRNA(Tyr) using S-adenosyl-L-methionine as donor of the methyl groups. Dimethylation at position 27 of tRNA(Tyr) is required for efficient translation of tyrosine codons. Also required to maintain 3-(3-amino-3-carboxypropyl)uridine (acp3U) in the D-loop of several cytoplasmic tRNAs. May play a role in motor coordination and exploratory behavior. The protein is tRNA (guanine(27)-N(2))-dimethyltransferase of Mus musculus (Mouse).